We begin with the raw amino-acid sequence, 419 residues long: Interferon regulatory factor 3 (419 aa).

T3 is subject to Phosphothreonine. Residues 5-111 constitute a DNA-binding region (IRF tryptophan pentad repeat); sequence KPRILPWLVS…DPHKVYEFVT (107 aa). S14 carries the post-translational modification Phosphoserine. The residue at position 75 (T75) is a Phosphothreonine. S97, S123, and S135 each carry phosphoserine. A mediates interaction with ZDHHC11 region spans residues 140-419; sequence PKLFDGLILG…DMDFQATGNI (280 aa). K188 is covalently cross-linked (Glycyl lysine isopeptide (Lys-Gly) (interchain with G-Cter in ISG15)). Positions 194–353 are interaction with HERC5; the sequence is EQWEFEVTAF…MWPQDQPWVK (160 aa). T230, T237, and T246 each carry phosphothreonine. Residues K353 and K359 each participate in a glycyl lysine isopeptide (Lys-Gly) (interchain with G-Cter in ISG15) cross-link. K359 carries the N6-acetyllysine modification. S378 is modified (phosphoserine). The residue at position 379 (S379) is a Diphosphoserine. S379 is modified (phosphoserine; by TBK1). S388 is subject to Phosphoserine; by IKKE. S390 bears the Phosphoserine mark. A Phosphothreonine modification is found at T396.

This sequence belongs to the IRF family. In terms of assembly, monomer. Homodimer; phosphorylation-induced. Interacts (when phosphorylated) with CREBBP. Interacts with MAVS (via phosphorylated pLxIS motif). Interacts with TICAM1 (via phosphorylated pLxIS motif). Interacts with STING1 (via phosphorylated pLxIS motif). Interacts with IKBKE and TBK1. Interacts with TICAM2. Interacts with RBCK1. Interacts with HERC5. Interacts with DDX3X; the interaction allows the phosphorylation and activation of IRF3 by IKBKE. Interacts with TRIM21 and ULK1, in the presence of TRIM21; this interaction leads to IRF3 degradation by autophagy. Interacts with RIOK3; RIOK3 probably mediates the interaction of TBK1 with IRF3. Interacts with ILRUN; the interaction inhibits IRF3 binding to its DNA consensus sequence. Interacts with LYAR; this interaction impairs IRF3 DNA-binding activity. Interacts with TRAF3. Interacts with ZDHHC11; ZDHHC11 recruits IRF3 to STING1 upon DNA virus infection and thereby promotes IRF3 activation. Interacts with HSP90AA1; the interaction mediates IRF3 association with TOMM70. Interacts with BCL2; the interaction decreases upon Sendai virus infection. Interacts with BAX; the interaction is direct, increases upon virus infection and mediates the formation of the apoptosis complex TOMM70:HSP90AA1:IRF3:BAX. Interacts with DDX56. Interacts with NBR1. Post-translationally, constitutively phosphorylated on many Ser/Thr residues. Activated following phosphorylation by TBK1 and IKBKE. Innate adapter proteins, such as MAVS, STING1 or TICAM1, are first activated by viral RNA, cytosolic DNA, and bacterial lipopolysaccharide (LPS), respectively, leading to activation of the kinases TBK1 and IKBKE. These kinases then phosphorylate the adapter proteins on the pLxIS motif, leading to recruitment of IRF3, thereby licensing IRF3 for phosphorylation by TBK1. Phosphorylation at Ser-379 is followed by pyrophosphorylation at the same residue, promoting phosphorylation at Ser-388. Phosphorylated IRF3 dissociates from the adapter proteins, dimerizes, and then enters the nucleus to induce IFNs. In terms of processing, pyrophosphorylated by UAP1 following phosphorylation at Ser-379 by TBK1. Pyrophosphorylation promotes subsequent phosphorylation at Ser-388, leading to homodimerization of IRF3. Acetylation at Lys-359 by KAT8 inhibits recruimtent to promoters and transcription factor activity. Acetylation by KAT8 is promoted by phosphorylation at Ser-388. Post-translationally, ubiquitinated; ubiquitination involves RBCK1 leading to proteasomal degradation. Polyubiquitinated; ubiquitination involves TRIM21 leading to proteasomal degradation. Ubiquitinated by UBE3C, leading to its degradation. Deubiquitinated by USP5 on both 'Lys-48'-linked unanchored and 'Lys-63'-linked anchored polyubiquitin, leading to inhibition of anti-RNA viral innate immunity. In terms of processing, ISGylated by HERC5 resulting in sustained IRF3 activation and in the inhibition of IRF3 ubiquitination by disrupting PIN1 binding. The phosphorylation state of IRF3 does not alter ISGylation. Proteolytically cleaved by apoptotic caspases during apoptosis, leading to its inactivation. Cleavage by CASP3 during virus-induced apoptosis inactivates it, preventing cytokine overproduction.

The protein localises to the cytoplasm. The protein resides in the nucleus. It localises to the mitochondrion. Its activity is regulated as follows. In the absence of viral infection, maintained as a monomer in an autoinhibited state. Phosphorylation by TBK1 and IKBKE disrupts this autoinhibition leading to the liberation of the DNA-binding and dimerization activities and its nuclear localization where it can activate type I IFN and ISG genes. Phosphorylation and activation follow the following steps: innate adapter proteins, such as MAVS, STING1 or TICAM1, are first activated by viral RNA, cytosolic DNA and bacterial lipopolysaccharide (LPS), respectively, leading to activation of the kinases TBK1 and IKBKE. These kinases then phosphorylate the adapter proteins on their pLxIS motif, leading to recruitment of IRF3, thereby licensing IRF3 for phosphorylation by TBK1. Phosphorylated IRF3 dissociates from the adapter proteins, dimerizes, and then enters the nucleus to induce IFNs. Its function is as follows. Key transcriptional regulator of type I interferon (IFN)-dependent immune responses which plays a critical role in the innate immune response against DNA and RNA viruses. Regulates the transcription of type I IFN genes (IFN-alpha and IFN-beta) and IFN-stimulated genes (ISG) by binding to an interferon-stimulated response element (ISRE) in their promoters. Acts as a more potent activator of the IFN-beta (IFNB) gene than the IFN-alpha (IFNA) gene and plays a critical role in both the early and late phases of the IFNA/B gene induction. Found in an inactive form in the cytoplasm of uninfected cells and following viral infection, double-stranded RNA (dsRNA), or toll-like receptor (TLR) signaling, is phosphorylated by IKBKE and TBK1 kinases. This induces a conformational change, leading to its dimerization and nuclear localization and association with CREB binding protein (CREBBP) to form dsRNA-activated factor 1 (DRAF1), a complex which activates the transcription of the type I IFN and ISG genes. Can activate distinct gene expression programs in macrophages and can induce significant apoptosis in primary macrophages. This is Interferon regulatory factor 3 (Irf3) from Mus musculus (Mouse).